The sequence spans 92 residues: Large ribosomal subunit protein bL27 (92 aa).

Positions 1–9 (MIKANLQLF) are excised as a propeptide.

It belongs to the bacterial ribosomal protein bL27 family. In terms of processing, the N-terminus is cleaved by ribosomal processing cysteine protease Prp.

The sequence is that of Large ribosomal subunit protein bL27 from Acetivibrio thermocellus (strain ATCC 27405 / DSM 1237 / JCM 9322 / NBRC 103400 / NCIMB 10682 / NRRL B-4536 / VPI 7372) (Clostridium thermocellum).